The chain runs to 297 residues: MPWRPPAHSVPGREGQFYAATFHAHAAFCGCGGFIEHLNSIHPRFLGAGGPPPPPPALRRALPAPEGPGGPPQHAPPNPPPEGDHQPPRRGGGAGGAGDGHAGDGDAAEEYGPEDLDLLFAAAAEDDMSFKAPSSRHQTRGPGRRAKKRLRFSPGSPRQPRLGGESRRSPSPRRTSTPKRKRGATPQAAPAAKTTPASPQTRTPSPVRRRTQTEEGSPHRPPPYIAPPPIVEDLLFPNTQKKKKFSKFDWETEAQLAACFDRPMRFFPSDLPTYPWLPKKPTTQTTFRVSFQLKAPQ.

Positions 46–229 (LGAGGPPPPP…RPPPYIAPPP (184 aa)) are disordered. The segment covering 65-81 (PEGPGGPPQHAPPNPPP) has biased composition (pro residues). The segment covering 90 to 100 (RGGGAGGAGDG) has biased composition (gly residues). Over residues 106–117 (DAAEEYGPEDLD) the composition is skewed to acidic residues. The segment covering 137-151 (HQTRGPGRRAKKRLR) has biased composition (basic residues). Residues 184-201 (ATPQAAPAAKTTPASPQT) show a composition bias toward low complexity. A compositionally biased stretch (pro residues) spans 219-229 (HRPPPYIAPPP).

This is an uncharacterized protein from Torque teno virus (isolate Human/China/CT23F/2001) (TTV).